A 106-amino-acid chain; its full sequence is Putative double-stranded DNA mimic protein VV1_3059 (106 aa).

Belongs to the putative dsDNA mimic protein family.

Its function is as follows. May act as a double-stranded DNA (dsDNA) mimic. Probably regulates the activity of a dsDNA-binding protein. The chain is Putative double-stranded DNA mimic protein VV1_3059 from Vibrio vulnificus (strain CMCP6).